The primary structure comprises 433 residues: Enolase (433 aa).

Glutamine 167 is a (2R)-2-phosphoglycerate binding site. Residue glutamate 209 is the Proton donor of the active site. Residues aspartate 246, glutamate 291, and aspartate 318 each coordinate Mg(2+). 4 residues coordinate (2R)-2-phosphoglycerate: lysine 343, arginine 372, serine 373, and lysine 394. Residue lysine 343 is the Proton acceptor of the active site.

Belongs to the enolase family. As to quaternary structure, component of the RNA degradosome, a multiprotein complex involved in RNA processing and mRNA degradation. Mg(2+) is required as a cofactor.

The protein resides in the cytoplasm. The protein localises to the secreted. It localises to the cell surface. The enzyme catalyses (2R)-2-phosphoglycerate = phosphoenolpyruvate + H2O. Its pathway is carbohydrate degradation; glycolysis; pyruvate from D-glyceraldehyde 3-phosphate: step 4/5. Catalyzes the reversible conversion of 2-phosphoglycerate (2-PG) into phosphoenolpyruvate (PEP). It is essential for the degradation of carbohydrates via glycolysis. The chain is Enolase from Marinomonas sp. (strain MWYL1).